Here is a 386-residue protein sequence, read N- to C-terminus: Cell division protein FtsZ (386 aa).

GTP contacts are provided by residues 18-22 (GGGVN), 105-107 (GTG), glutamate 136, arginine 140, and aspartate 184.

This sequence belongs to the FtsZ family. In terms of assembly, homodimer. Polymerizes to form a dynamic ring structure in a strictly GTP-dependent manner. Interacts directly with several other division proteins.

The protein localises to the cytoplasm. In terms of biological role, essential cell division protein that forms a contractile ring structure (Z ring) at the future cell division site. The regulation of the ring assembly controls the timing and the location of cell division. One of the functions of the FtsZ ring is to recruit other cell division proteins to the septum to produce a new cell wall between the dividing cells. Binds GTP and shows GTPase activity. The chain is Cell division protein FtsZ from Mycobacterium kansasii.